A 122-amino-acid chain; its full sequence is UPF0102 protein R00337 (122 aa).

It belongs to the UPF0102 family.

In Rhizobium meliloti (strain 1021) (Ensifer meliloti), this protein is UPF0102 protein R00337.